A 105-amino-acid polypeptide reads, in one-letter code: Met repressor (105 aa).

The protein belongs to the MetJ family. Homodimer.

Its subcellular location is the cytoplasm. Functionally, this regulatory protein, when combined with SAM (S-adenosylmethionine) represses the expression of the methionine regulon and of enzymes involved in SAM synthesis. This Haemophilus ducreyi (strain 35000HP / ATCC 700724) protein is Met repressor.